The following is a 178-amino-acid chain: PEST proteolytic signal-containing nuclear protein (178 aa).

The span at 1–15 shows a compositional bias: basic and acidic residues; it reads MADGKAGDEKPEKSQ. Residues 1–82 form a disordered region; it reads MADGKAGDEK…FAIGSQTTKK (82 aa). Ala-2 bears the N-acetylalanine mark. Residues 37 to 47 are compositionally biased toward low complexity; it reads SSSNGGESSSR. The residue at position 53 (Ser-53) is a Phosphoserine. An N6-acetyllysine modification is found at Lys-64. Ser-77, Ser-87, and Ser-119 each carry phosphoserine. Residues 134 to 178 are disordered; it reads NIGRDTPTSAGPNSFNKGKHGFSDNQKLWERNIKSHLGNVHDQDN. At Thr-139 the chain carries Phosphothreonine. The span at 139–149 shows a compositional bias: polar residues; it reads TPTSAGPNSFN. Ser-147 bears the Phosphoserine mark. 2 positions are modified to N6-acetyllysine: Lys-150 and Lys-152. A compositionally biased stretch (basic and acidic residues) spans 160 to 178; that stretch reads KLWERNIKSHLGNVHDQDN.

As to quaternary structure, interacts with UHRF2/NIRF. Post-translationally, ubiquitinated; mediated by UHRF2 and leading to its subsequent proteasomal degradation. N-terminally acetylated in a HYPK-dependent manner by the NatA acetyltransferase complex which is composed of NAA10 and NAA15.

It localises to the nucleus. In terms of biological role, may be involved in cell cycle regulation. This Homo sapiens (Human) protein is PEST proteolytic signal-containing nuclear protein (PCNP).